The sequence spans 751 residues: Ribosomal RNA large subunit methyltransferase K/L (751 aa).

In terms of domain architecture, THUMP spans 44–155 (LAYRTCLWSR…KNKLVLSIDL (112 aa)).

The protein belongs to the methyltransferase superfamily. RlmKL family.

It is found in the cytoplasm. The catalysed reaction is guanosine(2445) in 23S rRNA + S-adenosyl-L-methionine = N(2)-methylguanosine(2445) in 23S rRNA + S-adenosyl-L-homocysteine + H(+). It carries out the reaction guanosine(2069) in 23S rRNA + S-adenosyl-L-methionine = N(2)-methylguanosine(2069) in 23S rRNA + S-adenosyl-L-homocysteine + H(+). Functionally, specifically methylates the guanine in position 2445 (m2G2445) and the guanine in position 2069 (m7G2069) of 23S rRNA. This Cellvibrio japonicus (strain Ueda107) (Pseudomonas fluorescens subsp. cellulosa) protein is Ribosomal RNA large subunit methyltransferase K/L.